Reading from the N-terminus, the 60-residue chain is Large ribosomal subunit protein uL30 (60 aa).

This sequence belongs to the universal ribosomal protein uL30 family. Part of the 50S ribosomal subunit.

The chain is Large ribosomal subunit protein uL30 from Shewanella denitrificans (strain OS217 / ATCC BAA-1090 / DSM 15013).